The following is a 285-amino-acid chain: Eukaryotic translation initiation factor 3 subunit F-2 (285 aa).

Residues 11 to 145 enclose the MPN domain; the sequence is VLIKPLVLFQ…TRLYCAVEIG (135 aa).

The protein belongs to the eIF-3 subunit F family. As to quaternary structure, component of the eukaryotic translation initiation factor 3 (eIF-3) complex. The eIF-3 complex interacts with pix.

The protein resides in the cytoplasm. Functionally, component of the eukaryotic translation initiation factor 3 (eIF-3) complex, which is involved in protein synthesis of a specialized repertoire of mRNAs and, together with other initiation factors, stimulates binding of mRNA and methionyl-tRNAi to the 40S ribosome. The eIF-3 complex specifically targets and initiates translation of a subset of mRNAs involved in cell proliferation. The sequence is that of Eukaryotic translation initiation factor 3 subunit F-2 from Drosophila erecta (Fruit fly).